Reading from the N-terminus, the 279-residue chain is Lipid phosphate phosphatase epsilon 1, chloroplastic (279 aa).

Residues 1–88 (MAASSSLLLL…SFINNSSEIR (88 aa)) constitute a chloroplast transit peptide. 5 consecutive transmembrane segments (helical) span residues 126 to 142 (LWAV…SVVL), 164 to 184 (SHAQ…MEWL), 185 to 205 (GTNG…SYFI), 219 to 239 (VVVG…MWNS), and 255 to 275 (VFLF…LNWF).

This sequence belongs to the PA-phosphatase related phosphoesterase family. As to expression, expressed in root tips, root branch points, cotyledons and leaves.

Its subcellular location is the plastid. The protein resides in the chloroplast inner membrane. Inhibited by Mg(2+). In terms of biological role, exhibits phosphatidate phosphatase (PAP) activity in vitro. May play a secondary role as PAP in plastids. The polypeptide is Lipid phosphate phosphatase epsilon 1, chloroplastic (LPPE1) (Arabidopsis thaliana (Mouse-ear cress)).